A 219-amino-acid chain; its full sequence is SCMKAAPMKEVSIRGQGSLAYPGLRTQGNLETLSGPNDATRGLTSLADTFEHVIEELLDEQQVIQPSKENKDADLYSSRVMLSSQVPLEPPLLFLLEEYKNYLDAANMSMRVRRHSDPARRGELSVCDSTSEWVTAAEKKTAVDMSGATVTVLEKVPVPKGQLKQYFYETKCSSKGYAKEGCRGIDKRYWNSQCRTTQSYVRALTMDNKKRVGWRFIRI.

The signal sequence occupies residues 1 to 5; the sequence is SCMKA. The propeptide occupies 6-114; it reads APMKEVSIRG…AANMSMRVRR (109 aa). N-linked (GlcNAc...) asparagine glycosylation occurs at N107. A disulfide bridge connects residues C127 and C194.

Belongs to the NGF-beta family.

The protein localises to the secreted. Promotes the survival of neuronal populations that are all located either in the central nervous system or directly connected to it. The chain is Neurotrophic factor BDNF precursor form (BDNF) from Loxocemus bicolor (Mexican burrowing python).